Reading from the N-terminus, the 167-residue chain is NAD(P)H-quinone oxidoreductase subunit I, chloroplastic (167 aa).

4Fe-4S ferredoxin-type domains lie at 55 to 84 (GRIH…VDWK) and 95 to 124 (LNYS…MTEE). Positions 64, 67, 70, 74, 104, 107, 110, and 114 each coordinate [4Fe-4S] cluster.

The protein belongs to the complex I 23 kDa subunit family. NDH is composed of at least 16 different subunits, 5 of which are encoded in the nucleus. It depends on [4Fe-4S] cluster as a cofactor.

It is found in the plastid. It localises to the chloroplast thylakoid membrane. It carries out the reaction a plastoquinone + NADH + (n+1) H(+)(in) = a plastoquinol + NAD(+) + n H(+)(out). The catalysed reaction is a plastoquinone + NADPH + (n+1) H(+)(in) = a plastoquinol + NADP(+) + n H(+)(out). Functionally, NDH shuttles electrons from NAD(P)H:plastoquinone, via FMN and iron-sulfur (Fe-S) centers, to quinones in the photosynthetic chain and possibly in a chloroplast respiratory chain. The immediate electron acceptor for the enzyme in this species is believed to be plastoquinone. Couples the redox reaction to proton translocation, and thus conserves the redox energy in a proton gradient. The polypeptide is NAD(P)H-quinone oxidoreductase subunit I, chloroplastic (Gossypium barbadense (Sea Island cotton)).